Consider the following 141-residue polypeptide: Large ribosomal subunit protein uL11 (141 aa).

It belongs to the universal ribosomal protein uL11 family. In terms of assembly, part of the ribosomal stalk of the 50S ribosomal subunit. Interacts with L10 and the large rRNA to form the base of the stalk. L10 forms an elongated spine to which L12 dimers bind in a sequential fashion forming a multimeric L10(L12)X complex. Post-translationally, one or more lysine residues are methylated.

Functionally, forms part of the ribosomal stalk which helps the ribosome interact with GTP-bound translation factors. The sequence is that of Large ribosomal subunit protein uL11 from Geobacter sulfurreducens (strain ATCC 51573 / DSM 12127 / PCA).